Here is a 421-residue protein sequence, read N- to C-terminus: Myb-related protein Pp2 (421 aa).

HTH myb-type domains are found at residues 9 to 61 (KVGL…TNYL) and 62 to 116 (RPDL…KKRL). 2 DNA-binding regions (H-T-H motif) span residues 37–61 (WRAI…TNYL) and 89–112 (WSRI…NTRL). Positions 119–240 (QGLDPNTHLP…VTTKSHEDHR (122 aa)) are disordered. Residues 136-147 (DTEDDTDDEGGD) are compositionally biased toward acidic residues.

The protein localises to the nucleus. In terms of biological role, possible transcription activator. In Physcomitrium patens (Spreading-leaved earth moss), this protein is Myb-related protein Pp2 (PP2).